The chain runs to 1073 residues: Pharyngeal muscle protein 2 (1073 aa).

Residues 9-43 enclose the SAP domain; the sequence is INDLRVSELKTELEKRGLSTQGVKVVLTVRLNKAL. Disordered stretches follow at residues 59–186, 207–305, and 337–388; these read VSPM…PEVV, ELKE…SMET, and LLED…KSML. A compositionally biased stretch (acidic residues) spans 91-111; it reads EGNDENVLVEEKEEEEEEEDS. Residues 112 to 127 are compositionally biased toward basic and acidic residues; sequence HDLQIIEDHELEVPSD. Over residues 128–151 the composition is skewed to acidic residues; the sequence is EKDDTLVEDEEFEEAEQVEPEPEA. 2 stretches are compositionally biased toward basic and acidic residues: residues 156–182 and 207–217; these read VEEK…KPVE and ELKEKPEKEPE. 2 stretches are compositionally biased toward acidic residues: residues 223–232 and 248–265; these read EPVEQLENEP and QDGE…DIEI. Residues 277–293 are compositionally biased toward basic and acidic residues; it reads AEEKVEKKEKKPEEIPH. Residues 366–386 show a composition bias toward low complexity; the sequence is ASTPQATPSKAASSSAGSGKS. Residues 396–478 form the RRM domain; it reads TSIWIRGMTP…RVLRVEKVSE (83 aa). Disordered regions lie at residues 481-759, 845-917, and 1015-1073; these read LTSS…ERRR, QEHR…RNLV, and SQNA…RGNY. Composition is skewed to low complexity over residues 496-505 and 513-524; these read EAASTMSTSP and PVVTTTTTTSAA. The span at 573 to 587 shows a compositional bias: basic and acidic residues; the sequence is ITFDREEESNRDSRR. Residues 588–622 are compositionally biased toward low complexity; sequence TIAAAPPARTSRMARSPLRAPLRAARGSESSRSST. The span at 674–689 shows a compositional bias: polar residues; sequence VTVQQDAPRASYQTEQ. 2 stretches are compositionally biased toward basic and acidic residues: residues 707–727 and 742–759; these read VSPD…RRAP and PPRR…ERRR. 3 stretches are compositionally biased toward low complexity: residues 901–917, 1015–1026, and 1034–1060; these read SSSN…RNLV, SQNAATPSTSTS, and QWQQ…SSSN.

Expressed in most tissues including the hypodermal, muscle, neuronal, vulval and intestinal tissues. Isoform a: Expressed in the pharynx, nerve ring, intestine, neurons and ventral nerve cord.

Its subcellular location is the nucleus. Involved in pharyngeal muscle development and ensures pharyngeal grinder function during feeding. Plays a role in the defense against the accumulation of ingested live pathogenic bacteria in the intestine. Has a role in the determination of life span. In Caenorhabditis elegans, this protein is Pharyngeal muscle protein 2.